A 251-amino-acid chain; its full sequence is Cell division protein ZapD (251 aa).

The protein belongs to the ZapD family. In terms of assembly, interacts with FtsZ.

It localises to the cytoplasm. Functionally, cell division factor that enhances FtsZ-ring assembly. Directly interacts with FtsZ and promotes bundling of FtsZ protofilaments, with a reduction in FtsZ GTPase activity. This is Cell division protein ZapD from Paraburkholderia phymatum (strain DSM 17167 / CIP 108236 / LMG 21445 / STM815) (Burkholderia phymatum).